An 88-amino-acid chain; its full sequence is Molybdopterin synthase sulfur carrier subunit (88 aa).

The residue at position 88 (Gly88) is a 1-thioglycine; alternate. The residue at position 88 (Gly88) is a Glycyl adenylate; alternate.

This sequence belongs to the MoaD family. MOCS2A subfamily. As to quaternary structure, heterotetramer; composed of 2 small (MOCS2A) and 2 large (MOCS2B) subunits. Post-translationally, C-terminal thiocarboxylation occurs in 2 steps, it is first acyl-adenylated (-COAMP) via the hesA/moeB/thiF part of MOCS3, then thiocarboxylated (-COSH) via the rhodanese domain of MOCS3. As to expression, widely expressed. Highest levels are found in heart and skeletal muscle. Lower levels are present in brain, kidney and pancreas. Very low levels are found in lung and peripheral blood leukocytes.

Its subcellular location is the cytoplasm. It localises to the cytosol. Its pathway is cofactor biosynthesis; molybdopterin biosynthesis. Functionally, acts as a sulfur carrier required for molybdopterin biosynthesis. Component of the molybdopterin synthase complex that catalyzes the conversion of precursor Z into molybdopterin by mediating the incorporation of 2 sulfur atoms into precursor Z to generate a dithiolene group. In the complex, serves as sulfur donor by being thiocarboxylated (-COSH) at its C-terminus by MOCS3. After interaction with MOCS2B, the sulfur is then transferred to precursor Z to form molybdopterin. The sequence is that of Molybdopterin synthase sulfur carrier subunit from Homo sapiens (Human).